Here is a 249-residue protein sequence, read N- to C-terminus: Carboxy-S-adenosyl-L-methionine synthase (249 aa).

S-adenosyl-L-methionine contacts are provided by residues tyrosine 39, 64 to 66 (GCS), 117 to 118 (DI), asparagine 132, and arginine 199.

It belongs to the class I-like SAM-binding methyltransferase superfamily. Cx-SAM synthase family. Homodimer.

The enzyme catalyses prephenate + S-adenosyl-L-methionine = carboxy-S-adenosyl-L-methionine + 3-phenylpyruvate + H2O. Functionally, catalyzes the conversion of S-adenosyl-L-methionine (SAM) to carboxy-S-adenosyl-L-methionine (Cx-SAM). The chain is Carboxy-S-adenosyl-L-methionine synthase from Aeromonas hydrophila subsp. hydrophila (strain ATCC 7966 / DSM 30187 / BCRC 13018 / CCUG 14551 / JCM 1027 / KCTC 2358 / NCIMB 9240 / NCTC 8049).